The sequence spans 708 residues: Leucine-rich repeat neuronal protein 3 (708 aa).

An N-terminal signal peptide occupies residues Met1–Ala22. The 47-residue stretch at Val23–Ala69 folds into the LRRNT domain. Over Val23–Thr628 the chain is Extracellular. LRR repeat units follow at residues Asn70–Pro91, Asn93–Lys114, Gln117–Glu138, Asn141–Gly162, Asn165–Ala186, Asn189–Pro210, Asn213–Gly234, Asn237–Lys258, Asn261–Asn282, His285–Ala304, Asp310–Arg332, and Lys335–Pro358. 2 N-linked (GlcNAc...) asparagine glycosylation sites follow: Asn93 and Asn103. Residue Asn223 is glycosylated (N-linked (GlcNAc...) asparagine). The region spanning Asn368–Pro421 is the LRRCT domain. N-linked (GlcNAc...) asparagine glycosylation is present at Asn382. An Ig-like C2-type domain is found at Pro421–Asp514. Cysteines 444 and 496 form a disulfide. Asn522, Asn579, Asn608, Asn624, and Asn625 each carry an N-linked (GlcNAc...) asparagine glycan. The region spanning Gly523–Asp617 is the Fibronectin type-III domain. The chain crosses the membrane as a helical span at residues Leu629–Leu649. Topologically, residues Ser650 to Ser708 are cytoplasmic.

The protein localises to the membrane. In Homo sapiens (Human), this protein is Leucine-rich repeat neuronal protein 3 (LRRN3).